We begin with the raw amino-acid sequence, 1282 residues long: Indigoidine synthase (1282 aa).

An adenylation region spans residues 24 to 379; it reads AQRVAEHPEA…GGIQLARGYL (356 aa). The 76-residue stretch at 937–1012 folds into the Carrier domain; sequence APRTETEKEI…KLARRLEREV (76 aa). Ser972 bears the O-(pantetheine 4'-phosphoryl)serine mark. Residues 1030–1138 form a thioesterase region; that stretch reads RPVICWPGLG…APGSPKVRAE (109 aa).

This sequence belongs to the ATP-dependent AMP-binding enzyme family. Pantetheine 4'-phosphate is required as a cofactor.

It catalyses the reaction 2 FMN + 2 L-glutamine + 2 ATP + O2 = indigoidine + 2 FMNH2 + 2 AMP + 2 diphosphate + 2 H2O. The enzyme catalyses FMN + L-glutamine + ATP = 3-amino-1,5-dihydropyridine-2,6-dione + FMNH2 + AMP + diphosphate. The catalysed reaction is 2 3-amino-1,5-dihydropyridine-2,6-dione + O2 = indigoidine + 2 H2O. It functions in the pathway pigment biosynthesis. Its function is as follows. Nonribosomal peptide synthetase involved in the biosynthesis of the blue pigment indigoidine. Catalyzes the synthesis of the blue pigment using L-Gln as a substrate. Two glutamine molecules are cyclized and oxidized to form indigoidine. This chain is Indigoidine synthase, found in Streptomyces lavendulae.